A 164-amino-acid chain; its full sequence is Transcriptional repressor NrdR (164 aa).

A zinc finger spans residues 3–34 (CPFCSAQDTKVIDSRLVADGVQIRRRRECLSC). Positions 49–139 (PRLVKTDGTR…VYRSFQDISE (91 aa)) constitute an ATP-cone domain.

The protein belongs to the NrdR family. It depends on Zn(2+) as a cofactor.

In terms of biological role, negatively regulates transcription of bacterial ribonucleotide reductase nrd genes and operons by binding to NrdR-boxes. This is Transcriptional repressor NrdR from Alcanivorax borkumensis (strain ATCC 700651 / DSM 11573 / NCIMB 13689 / SK2).